The following is a 220-amino-acid chain: Putative F-box protein At3g20705 (220 aa).

Residues 1–51 form the F-box domain; sequence MMMMSNLPNDLVEEILSRVTVTFMRTVRSICKKWNALTKDRSFTNKYIRNI.

The sequence is that of Putative F-box protein At3g20705 from Arabidopsis thaliana (Mouse-ear cress).